We begin with the raw amino-acid sequence, 202 residues long: Peptidyl-tRNA hydrolase (202 aa).

TRNA is bound at residue tyrosine 16. The active-site Proton acceptor is histidine 21. TRNA is bound by residues tyrosine 68, asparagine 70, and asparagine 116.

This sequence belongs to the PTH family. In terms of assembly, monomer.

It is found in the cytoplasm. The enzyme catalyses an N-acyl-L-alpha-aminoacyl-tRNA + H2O = an N-acyl-L-amino acid + a tRNA + H(+). In terms of biological role, hydrolyzes ribosome-free peptidyl-tRNAs (with 1 or more amino acids incorporated), which drop off the ribosome during protein synthesis, or as a result of ribosome stalling. Catalyzes the release of premature peptidyl moieties from peptidyl-tRNA molecules trapped in stalled 50S ribosomal subunits, and thus maintains levels of free tRNAs and 50S ribosomes. This Treponema pallidum (strain Nichols) protein is Peptidyl-tRNA hydrolase.